The sequence spans 303 residues: Sulfate adenylyltransferase subunit 2 (303 aa).

This sequence belongs to the PAPS reductase family. CysD subfamily. Heterodimer composed of CysD, the smaller subunit, and CysN.

The enzyme catalyses sulfate + ATP + H(+) = adenosine 5'-phosphosulfate + diphosphate. It functions in the pathway sulfur metabolism; hydrogen sulfide biosynthesis; sulfite from sulfate: step 1/3. With CysN forms the ATP sulfurylase (ATPS) that catalyzes the adenylation of sulfate producing adenosine 5'-phosphosulfate (APS) and diphosphate, the first enzymatic step in sulfur assimilation pathway. APS synthesis involves the formation of a high-energy phosphoric-sulfuric acid anhydride bond driven by GTP hydrolysis by CysN coupled to ATP hydrolysis by CysD. In Aliarcobacter butzleri (strain RM4018) (Arcobacter butzleri), this protein is Sulfate adenylyltransferase subunit 2.